The chain runs to 150 residues: Large ribosomal subunit protein bL9 (150 aa).

This sequence belongs to the bacterial ribosomal protein bL9 family.

Its function is as follows. Binds to the 23S rRNA. In Buchnera aphidicola subsp. Acyrthosiphon pisum (strain 5A), this protein is Large ribosomal subunit protein bL9.